The chain runs to 370 residues: Dihydroorotate dehydrogenase (quinone) (370 aa).

FMN-binding positions include 67–71 (AGFDK) and Thr-91. Position 71 (Lys-71) interacts with substrate. 116 to 120 (NRMGF) serves as a coordination point for substrate. Residues Asn-146 and Asn-179 each coordinate FMN. Asn-179 contacts substrate. The active-site Nucleophile is Ser-182. A substrate-binding site is contributed by Asn-184. Residues Lys-222 and Thr-250 each coordinate FMN. 251–252 (NT) is a substrate binding site. Residues Gly-276, Gly-305, and 326 to 327 (YS) contribute to the FMN site.

It belongs to the dihydroorotate dehydrogenase family. Type 2 subfamily. As to quaternary structure, monomer. The cofactor is FMN.

The protein resides in the cell membrane. It carries out the reaction (S)-dihydroorotate + a quinone = orotate + a quinol. It participates in pyrimidine metabolism; UMP biosynthesis via de novo pathway; orotate from (S)-dihydroorotate (quinone route): step 1/1. Its function is as follows. Catalyzes the conversion of dihydroorotate to orotate with quinone as electron acceptor. This Streptomyces griseus subsp. griseus (strain JCM 4626 / CBS 651.72 / NBRC 13350 / KCC S-0626 / ISP 5235) protein is Dihydroorotate dehydrogenase (quinone).